We begin with the raw amino-acid sequence, 420 residues long: Coiled-coil domain-containing protein 85C (420 aa).

N-acetylalanine is present on Ala-2. 2 coiled-coil regions span residues 26–92 and 122–165; these read ELLR…RELC and HEVA…LAAA. The disordered stretch occupies residues 165-271; that stretch reads AGGAGGGGGG…NGLHDPSSTY (107 aa). Residues 166–176 are compositionally biased toward gly residues; sequence GGAGGGGGGAG. Ser-179 carries the post-translational modification Phosphoserine. Residues 185–212 are compositionally biased toward low complexity; it reads ASLSGPLAGSAAGSGARDVGDGSSTSSA. Ser-247 carries the phosphoserine modification.

Belongs to the CCDC85 family. In terms of assembly, may interact with ARVCF, CTNND1, CTNND2 and PKP4. As to expression, predominantly expressed on the surface of the lateral ventricular walls of the developing cerebral cortex.

It is found in the cell junction. The protein localises to the tight junction. Its subcellular location is the adherens junction. Functionally, may play a role in cell-cell adhesion and epithelium development through its interaction with proteins of the beta-catenin family. May play an important role in cortical development, especially in the maintenance of radial glia. The polypeptide is Coiled-coil domain-containing protein 85C (Ccdc85c) (Mus musculus (Mouse)).